Here is a 216-residue protein sequence, read N- to C-terminus: Flagellin B2 (216 aa).

Positions 1–12 (MKIKEFMSNKKG) are excised as a propeptide. Asn38, Asn72, Asn77, Asn113, Asn172, and Asn208 each carry an N-linked (GlcNAc...) asparagine glycan.

It belongs to the archaeal flagellin family. Post-translationally, N-linked glycans consist of the 779 Da trisaccharide beta-ManNAc(Thr)-(1-4)-beta-GlcNAc3NAcA-(1-3)-beta-GlcNAc.

It localises to the archaeal flagellum. Functionally, flagellin is the subunit protein which polymerizes to form the filaments of archaeal flagella. In Methanococcus voltae, this protein is Flagellin B2 (flaB2).